Here is a 181-residue protein sequence, read N- to C-terminus: Adenine phosphoribosyltransferase (181 aa).

It belongs to the purine/pyrimidine phosphoribosyltransferase family. In terms of assembly, homodimer.

Its subcellular location is the cytoplasm. It catalyses the reaction AMP + diphosphate = 5-phospho-alpha-D-ribose 1-diphosphate + adenine. It functions in the pathway purine metabolism; AMP biosynthesis via salvage pathway; AMP from adenine: step 1/1. Catalyzes a salvage reaction resulting in the formation of AMP, that is energically less costly than de novo synthesis. This Drosophila pseudoobscura pseudoobscura (Fruit fly) protein is Adenine phosphoribosyltransferase (Aprt).